A 775-amino-acid polypeptide reads, in one-letter code: Thiamine repressible genes regulatory protein thi1 (775 aa).

The zn(2)-C6 fungal-type DNA-binding region spans 39–65 (CKHCRQKKIKCNGGQPCISCKTLNIEC). Residue Ser208 is modified to Phosphoserine. Disordered stretches follow at residues 676-695 (LTGESSNGSNSTPNEAFQPF) and 754-775 (NVSEQSSHTAEQTSNLTLEKNG).

The protein localises to the nucleus. Transcription factor that activates the nmt1 promoter. Regulation of thiamine repressible genes. Positively regulates conjugation during meiosis. This Schizosaccharomyces pombe (strain 972 / ATCC 24843) (Fission yeast) protein is Thiamine repressible genes regulatory protein thi1 (thi1).